A 97-amino-acid polypeptide reads, in one-letter code: Small ribosomal subunit protein bS6 (97 aa).

This sequence belongs to the bacterial ribosomal protein bS6 family.

In terms of biological role, binds together with bS18 to 16S ribosomal RNA. This Syntrophomonas wolfei subsp. wolfei (strain DSM 2245B / Goettingen) protein is Small ribosomal subunit protein bS6.